The following is a 172-amino-acid chain: RNA pyrophosphohydrolase (172 aa).

Residues 8–153 (QHRPNVGVVL…KRGVYEAVVA (146 aa)) form the Nudix hydrolase domain. Residues 43-64 (GGVDEGEDLEVAARRELAEETG) carry the Nudix box motif.

This sequence belongs to the Nudix hydrolase family. RppH subfamily. A divalent metal cation is required as a cofactor.

Accelerates the degradation of transcripts by removing pyrophosphate from the 5'-end of triphosphorylated RNA, leading to a more labile monophosphorylated state that can stimulate subsequent ribonuclease cleavage. The polypeptide is RNA pyrophosphohydrolase (Caulobacter vibrioides (strain ATCC 19089 / CIP 103742 / CB 15) (Caulobacter crescentus)).